The sequence spans 175 residues: Ribulose bisphosphate carboxylase small subunit, chloroplastic (175 aa).

The transit peptide at 1–46 (MAPTVMASSATSVAPFQGLKSTAGLPVSRRSNGASLGSVSNGGRIR) directs the protein to the chloroplast.

The protein belongs to the RuBisCO small chain family. As to quaternary structure, heterohexadecamer of 8 large and 8 small subunits.

It is found in the plastid. Its subcellular location is the chloroplast. In terms of biological role, ruBisCO catalyzes two reactions: the carboxylation of D-ribulose 1,5-bisphosphate, the primary event in carbon dioxide fixation, as well as the oxidative fragmentation of the pentose substrate. Both reactions occur simultaneously and in competition at the same active site. Although the small subunit is not catalytic it is essential for maximal activity. This chain is Ribulose bisphosphate carboxylase small subunit, chloroplastic, found in Aegilops tauschii (Tausch's goatgrass).